The sequence spans 222 residues: Charged multivesicular body protein 3 (222 aa).

Residue Gly-2 is the site of N-myristoyl glycine attachment. The tract at residues 2 to 113 is intramolecular interaction with C-terminus; it reads GLFGKTQEKP…LQKSTEVMKA (112 aa). Residues 22–54 are a coiled coil; the sequence is KIRKEMRVVDRQIRDIQREEEKVKRSVKDAAKK. Important for autoinhibitory function regions lie at residues 59-64 and 168-169; these read VCVVLA and IL. Residues 149–222 adopt a coiled-coil conformation; it reads ESMDDQEEME…MQSRLATLRS (74 aa). Residues 151–220 are intramolecular interaction with N-terminus; that stretch reads MDDQEEMEEA…EAMQSRLATL (70 aa). The segment at 151–222 is interaction with VPS4A; it reads MDDQEEMEEA…MQSRLATLRS (72 aa). Lys-179 is covalently cross-linked (Glycyl lysine isopeptide (Lys-Gly) (interchain with G-Cter in ubiquitin)). Residues 180 to 222 form a disordered region; it reads APSKVTDALPEPEPLGAMAASEDEEEEEEALEAMQSRLATLRS. 3 interaction with STAMBP regions span residues 196 to 222, 203 to 207, and 221 to 222; these read AMAASEDEEEEEEALEAMQSRLATLRS, EEEEE, and RS. Position 200 is a phosphoserine (Ser-200). The segment covering 200–210 has biased composition (acidic residues); it reads SEDEEEEEEAL. The short motif at 201–211 is the MIT-interacting motif element; that stretch reads EDEEEEEEALE.

Belongs to the SNF7 family. As to quaternary structure, probable core component of the endosomal sorting required for transport complex III (ESCRT-III). ESCRT-III components are thought to multimerize to form a flat lattice on the perimeter membrane of the endosome. Several assembly forms of ESCRT-III may exist that interact and act sequentially. Forms a metastable monomer in solution; its core structure (without part of the putative autoinhibitory C-terminal acidic region) oligomerizes into a flat lattice via two different dimerization interfaces. In vitro, heteromerizes with CHMP2A (but not CHMP4) to form helical tubular structures that expose membrane-interacting sites on the outside whereas VPS4B can associate on the inside of the tubule. May interact with IGFBP7; the relevance of such interaction however remains unclear. Interacts with CHMP2A. Interacts with CHMP4A; the interaction requires the release of CHMP4A autoinhibition. Interacts with VPS4A. Interacts with STAMBP; the interaction appears to relieve the autoinhibition of CHMP3. Interacts with VTA1.

The protein resides in the cytoplasm. It is found in the cytosol. It localises to the membrane. The protein localises to the endosome. Its subcellular location is the late endosome membrane. Its function is as follows. Probable core component of the endosomal sorting required for transport complex III (ESCRT-III) which is involved in multivesicular bodies (MVBs) formation and sorting of endosomal cargo proteins into MVBs. MVBs contain intraluminal vesicles (ILVs) that are generated by invagination and scission from the limiting membrane of the endosome and mostly are delivered to lysosomes enabling degradation of membrane proteins, such as stimulated growth factor receptors, lysosomal enzymes and lipids. The MVB pathway appears to require the sequential function of ESCRT-O, -I,-II and -III complexes. ESCRT-III proteins mostly dissociate from the invaginating membrane before the ILV is released. The ESCRT machinery also functions in topologically equivalent membrane fission events, such as the terminal stages of cytokinesis and the budding of enveloped viruses (lentiviruses). ESCRT-III proteins are believed to mediate the necessary vesicle extrusion and/or membrane fission activities, possibly in conjunction with the AAA ATPase VPS4. Selectively binds to phosphatidylinositol 3,5-bisphosphate PtdIns(3,5)P2 and PtdIns(3,4)P2 in preference to other phosphoinositides tested. Involved in late stages of cytokinesis. Plays a role in endosomal sorting/trafficking of EGF receptor. This chain is Charged multivesicular body protein 3 (CHMP3), found in Bos taurus (Bovine).